The chain runs to 125 residues: UPF0231 protein HD_1708 (125 aa).

This sequence belongs to the UPF0231 family.

The chain is UPF0231 protein HD_1708 from Haemophilus ducreyi (strain 35000HP / ATCC 700724).